Consider the following 137-residue polypeptide: MTLNLCVLTPNRTVWDSEVKEIILSTNSGQIGVLKNHAPIATALDIGILKIRLTNQQWVTMALMGGFARIGNNEITILVNDAEKSIDIDPQEAQQTLKIAEANLNKAEGKRQTIEANLALRRARTRVETILESINRF.

It belongs to the ATPase epsilon chain family. In terms of assembly, F-type ATPases have 2 components, CF(1) - the catalytic core - and CF(0) - the membrane proton channel. CF(1) has five subunits: alpha(3), beta(3), gamma(1), delta(1), epsilon(1). CF(0) has three main subunits: a, b and c.

The protein resides in the plastid. It localises to the chloroplast thylakoid membrane. Its function is as follows. Produces ATP from ADP in the presence of a proton gradient across the membrane. This is ATP synthase epsilon chain, chloroplastic from Medicago sativa (Alfalfa).